The primary structure comprises 704 residues: Boron transporter 1 (704 aa).

Over 1–35 the chain is Cytoplasmic; that stretch reads MEETFVPFEGIKNDLKGRLMCYKQDWTGGFKAGFR. The helical transmembrane segment at 36–56 threads the bilayer; that stretch reads ILAPTTYIFFASAIPVISFGE. Topologically, residues 57–75 are extracellular; that stretch reads QLERSTDGVLTAVQTLAST. A helical transmembrane segment spans residues 76–96; sequence AICGMIHSIIGGQPLLILGVA. Topologically, residues 97–120 are cytoplasmic; it reads EPTVIMYTFMFNFAKARPELGRDL. Residues 121 to 141 form a helical membrane-spanning segment; the sequence is FLAWSGWVCVWTALMLFVLAI. At 142-155 the chain is on the extracellular side; the sequence is CGACSIINRFTRVA. A helical membrane pass occupies residues 156–176; that stretch reads GELFGLLIAMLFMQQAIKGLV. Topologically, residues 177 to 195 are cytoplasmic; it reads DEFRIPERENQKLKEFLPS. A helical membrane pass occupies residues 196–216; the sequence is WRFANGMFALVLSFGLLLTGL. Residues 217-233 lie on the Extracellular side of the membrane; the sequence is RSRKARSWRYGTGWLRS. The helical transmembrane segment at 234-254 threads the bilayer; that stretch reads LIADYGVPLMVLVWTGVSYIP. Topologically, residues 255 to 289 are cytoplasmic; sequence AGDVPKGIPRRLFSPNPWSPGAYGNWTVVKEMLDV. The helical transmembrane segment at 290 to 310 threads the bilayer; it reads PIVYIIGAFIPASMIAVLYYF. The Extracellular portion of the chain corresponds to 311-337; sequence DHSVASQLAQQKEFNLRKPSSYHYDLL. The chain crosses the membrane as a helical span at residues 338–358; that stretch reads LLGFLTLMCGLLGVPPSNGVI. Residues 359 to 480 are Cytoplasmic-facing; it reads PQSPMHTKSL…STMVGGCVAA (122 aa). A helical membrane pass occupies residues 481-501; it reads MPILKMIPTSVLWGYFAFMAI. Residues 502–557 lie on the Extracellular side of the membrane; that stretch reads ESLPGNQFWERILLLFTAPSRRFKVLEDYHATFVETVPFKTIAMFTLFQTTYLLIC. A helical transmembrane segment spans residues 558-578; that stretch reads FGLTWIPIAGVMFPLMIMFLI. Over 579–704 the chain is Cytoplasmic; the sequence is PVRQYLLPRF…RSPLNQSSSN (126 aa). The tract at residues 641–704 is disordered; sequence EFRHTSSPKV…RSPLNQSSSN (64 aa). Residues 647 to 664 show a composition bias toward low complexity; sequence SPKVTSSSSTPVNNRSLS.

It belongs to the anion exchanger (TC 2.A.31.3) family. Expressed in proximal side of various root cells, notably in the columella, lateral root cap, epidermis and endodermis in tip and elongation zones of the root. Also detected in the epidermis, cortex, endodermis, and stele cells of the root hair zone. Observed in cotyledons and hypocotyls.

Its subcellular location is the cell membrane. The protein resides in the endosome membrane. It is found in the vacuole membrane. Efflux-type boron (B) transporter for xylem loading, responsive of boron translocation from roots to shoots under boron limitation. Boron is essential for maintaining the integrity of plants cell walls. The protein is Boron transporter 1 of Arabidopsis thaliana (Mouse-ear cress).